Consider the following 407-residue polypeptide: Argininosuccinate synthase (407 aa).

Residues 12–20 and Ala39 contribute to the ATP site; that span reads AYSGGLDTS. Tyr92 and Ser97 together coordinate L-citrulline. ATP is bound at residue Gly122. L-aspartate is bound by residues Thr124, Asn128, and Asp129. L-citrulline is bound at residue Asn128. Arg132, Ser183, Ser192, Glu268, and Tyr280 together coordinate L-citrulline.

Belongs to the argininosuccinate synthase family. Type 1 subfamily. As to quaternary structure, homotetramer.

It localises to the cytoplasm. The catalysed reaction is L-citrulline + L-aspartate + ATP = 2-(N(omega)-L-arginino)succinate + AMP + diphosphate + H(+). The protein operates within amino-acid biosynthesis; L-arginine biosynthesis; L-arginine from L-ornithine and carbamoyl phosphate: step 2/3. The protein is Argininosuccinate synthase of Caulobacter sp. (strain K31).